The following is a 191-amino-acid chain: A-type ATP synthase subunit E 1 (191 aa).

The protein belongs to the V-ATPase E subunit family. In terms of assembly, has multiple subunits with at least A(3), B(3), C, D, E, F, H, I and proteolipid K(x).

Its subcellular location is the cell membrane. In terms of biological role, component of the A-type ATP synthase that produces ATP from ADP in the presence of a proton gradient across the membrane. In Methanospirillum hungatei JF-1 (strain ATCC 27890 / DSM 864 / NBRC 100397 / JF-1), this protein is A-type ATP synthase subunit E 1.